Here is a 357-residue protein sequence, read N- to C-terminus: UDP-N-acetylglucosamine--N-acetylmuramyl-(pentapeptide) pyrophosphoryl-undecaprenol N-acetylglucosamine transferase (357 aa).

Residues 12-14, asparagine 124, arginine 162, serine 190, isoleucine 243, 262-267, and glutamine 288 contribute to the UDP-N-acetyl-alpha-D-glucosamine site; these read TGG and ALTVAE.

This sequence belongs to the glycosyltransferase 28 family. MurG subfamily.

Its subcellular location is the cell inner membrane. It carries out the reaction di-trans,octa-cis-undecaprenyl diphospho-N-acetyl-alpha-D-muramoyl-L-alanyl-D-glutamyl-meso-2,6-diaminopimeloyl-D-alanyl-D-alanine + UDP-N-acetyl-alpha-D-glucosamine = di-trans,octa-cis-undecaprenyl diphospho-[N-acetyl-alpha-D-glucosaminyl-(1-&gt;4)]-N-acetyl-alpha-D-muramoyl-L-alanyl-D-glutamyl-meso-2,6-diaminopimeloyl-D-alanyl-D-alanine + UDP + H(+). The protein operates within cell wall biogenesis; peptidoglycan biosynthesis. Its function is as follows. Cell wall formation. Catalyzes the transfer of a GlcNAc subunit on undecaprenyl-pyrophosphoryl-MurNAc-pentapeptide (lipid intermediate I) to form undecaprenyl-pyrophosphoryl-MurNAc-(pentapeptide)GlcNAc (lipid intermediate II). This Alcanivorax borkumensis (strain ATCC 700651 / DSM 11573 / NCIMB 13689 / SK2) protein is UDP-N-acetylglucosamine--N-acetylmuramyl-(pentapeptide) pyrophosphoryl-undecaprenol N-acetylglucosamine transferase.